The primary structure comprises 255 residues: NAD kinase (255 aa).

Asp-44 functions as the Proton acceptor in the catalytic mechanism. Residues 44–45, His-49, 114–115, Asp-144, Ala-152, 155–160, and Gln-216 each bind NAD(+); these read DG, NE, and SAYNLS.

It belongs to the NAD kinase family. A divalent metal cation serves as cofactor.

The protein localises to the cytoplasm. The catalysed reaction is NAD(+) + ATP = ADP + NADP(+) + H(+). Involved in the regulation of the intracellular balance of NAD and NADP, and is a key enzyme in the biosynthesis of NADP. Catalyzes specifically the phosphorylation on 2'-hydroxyl of the adenosine moiety of NAD to yield NADP. In Rickettsia felis (strain ATCC VR-1525 / URRWXCal2) (Rickettsia azadi), this protein is NAD kinase.